Consider the following 341-residue polypeptide: Trans-3-hydroxy-L-proline dehydratase (341 aa).

The active-site Proton acceptor is the S90. Residues 91–92 (GS), D252, and 257–258 (GT) contribute to the substrate site.

Belongs to the proline racemase family.

The enzyme catalyses trans-3-hydroxy-L-proline = 1-pyrroline-2-carboxylate + H2O. In terms of biological role, catalyzes the dehydration of trans-3-hydroxy-L-proline (t3LHyp) to Delta(1)-pyrroline-2-carboxylate (Pyr2C). May be involved in a degradation pathway of t3LHyp, which would allow L.aggregata to grow on t3LHyp as a sole carbon source. Displays neither proline racemase activity nor 4-hydroxyproline 2-epimerase activity. The polypeptide is Trans-3-hydroxy-L-proline dehydratase (Roseibium aggregatum (strain ATCC 25650 / DSM 13394 / JCM 20685 / NBRC 16684 / NCIMB 2208 / IAM 12614 / B1) (Stappia aggregata)).